Here is an 887-residue protein sequence, read N- to C-terminus: MAEKELAKVYEPTAVERKWYETWEQEGYFRANPDSGKPSYSIVIPPPNVTGALHMGHALNNTLQDILCRWKRMNGYEVLWMPGTDHAGIATQNVVERQLAGEGTSRHELGREAFIERVWKWKAESGGQIIGQLKRLGASCDWGRERFTMDEGLSRAVREVFVRLYEEGLIYRDNRLINWCPRCHTALSDIEVEHEDKAGNLWHIRYPVVGEPGRFVVVATTRPETMLGDTAVAVHPEDERYADLVGKKVLLPLVNREIPVVADGYVDREFGTGVVKITPAHDFNDFEVGRRHNLDLLNVFDESAVVNSAGHQYEGMERFAARKRVVEDLEALGLLEKIDDHAHAVGGCYRCKTVVEPYLSLQWYVKVGPLAERALAAVKDGRTRIVPQQWENTYYDWMENIKDWCISRQIWWGHRIPAWYCDHCGETTVAKIDPTVCAACGSDEIRQETDVLDTWFSSALWPFSTMGWPDRTPELAAFYPTSCLVTGFDILFFWVARMMMMGLHFMNEVPFSDVYIHALVRDAQGQKMSKSKGNVIDPLVVIDQYGTDAFRFTLAAFAAQGRDIKLAEERIAGYRNFVNKIWNASRFALMNLEGFEPDTVDPATLDLSNADRWILHRLNSAAAETAEALEAYRFNDAAGTLYRFTWSEFCDWYIELAKDDLYRGDDARKETARYVLWLVLENLLRLLHPFMPFITEEIWQTLPGARPAPSIMVAGYPRSVPERDFPDGAAEMELVMEVIRGIRNIRGEMDVAPSREIAAILSCGSAESLHLLKRNEVYVMSLARLSDLAIGQQLERPADAAIQVAGDVEIAVPLKGLVNVEEEEKRLLKEIGKLDKEIEMFGRKLENPSFVERAPADVVAKEREKLAEVTQKKDVLLASLEKIRKLA.

The 'HIGH' region motif lies at 47–57 (PNVTGALHMGH). The 'KMSKS' region motif lies at 527–531 (KMSKS). K530 provides a ligand contact to ATP. A coiled-coil region spans residues 817-885 (LVNVEEEEKR…LLASLEKIRK (69 aa)).

The protein belongs to the class-I aminoacyl-tRNA synthetase family. ValS type 1 subfamily. Monomer.

It is found in the cytoplasm. It catalyses the reaction tRNA(Val) + L-valine + ATP = L-valyl-tRNA(Val) + AMP + diphosphate. In terms of biological role, catalyzes the attachment of valine to tRNA(Val). As ValRS can inadvertently accommodate and process structurally similar amino acids such as threonine, to avoid such errors, it has a 'posttransfer' editing activity that hydrolyzes mischarged Thr-tRNA(Val) in a tRNA-dependent manner. The polypeptide is Valine--tRNA ligase (Geobacter sulfurreducens (strain ATCC 51573 / DSM 12127 / PCA)).